A 273-amino-acid polypeptide reads, in one-letter code: 2,3,4,5-tetrahydropyridine-2,6-dicarboxylate N-succinyltransferase (273 aa).

Substrate is bound by residues Arg104 and Asp141.

It belongs to the transferase hexapeptide repeat family. Homotrimer.

It is found in the cytoplasm. It catalyses the reaction (S)-2,3,4,5-tetrahydrodipicolinate + succinyl-CoA + H2O = (S)-2-succinylamino-6-oxoheptanedioate + CoA. It functions in the pathway amino-acid biosynthesis; L-lysine biosynthesis via DAP pathway; LL-2,6-diaminopimelate from (S)-tetrahydrodipicolinate (succinylase route): step 1/3. This is 2,3,4,5-tetrahydropyridine-2,6-dicarboxylate N-succinyltransferase from Nitrosomonas eutropha (strain DSM 101675 / C91 / Nm57).